We begin with the raw amino-acid sequence, 260 residues long: CD40 ligand (260 aa).

At 1–22 (MIETYSQPSPRSVATGLPASMK) the chain is on the cytoplasmic side. Residues 23-46 (IFMYLLTVFLITQMIGSVLFAVYL) form a helical; Signal-anchor for type II membrane protein membrane-spanning segment. Topologically, residues 47 to 260 (HRRLDKVEEE…GFSSFGLLKL (214 aa)) are extracellular. A THD domain is found at 121 to 260 (IAAHVVSEAN…GFSSFGLLKL (140 aa)). The cysteines at positions 177 and 217 are disulfide-linked. An N-linked (GlcNAc...) asparagine glycan is attached at Asn-239.

The protein belongs to the tumor necrosis factor family. In terms of assembly, homotrimer. Interacts with CD28. CD40 ligand, soluble form: Exists as either a monomer or a homotrimer. Forms a ternary complex between CD40 and integrins for CD40-CD40LG signaling. In terms of processing, the soluble form derives from the membrane form by proteolytic processing. In terms of tissue distribution, specifically expressed on activated CD4+ T-lymphocytes.

The protein localises to the cell membrane. Its subcellular location is the cell surface. The protein resides in the secreted. In terms of biological role, cytokine that acts as a ligand to CD40/TNFRSF5. Costimulates T-cell proliferation and cytokine production. Its cross-linking on T-cells generates a costimulatory signal which enhances the production of IL4 and IL10 in conjunction with the TCR/CD3 ligation and CD28 costimulation. Induces the activation of NF-kappa-B. Induces the activation of kinases MAPK8 and PAK2 in T-cells. Mediates B-cell proliferation in the absence of co-stimulus as well as IgE production in the presence of IL4. Involved in immunoglobulin class switching. Acts as a ligand for integrins, specifically ITGA5:ITGB1 and ITGAV:ITGB3; both integrins and the CD40 receptor are required for activation of CD40-CD40LG signaling, which have cell-type dependent effects, such as B-cell activation, NF-kappa-B signaling and anti-apoptotic signaling. This Mus musculus (Mouse) protein is CD40 ligand (Cd40lg).